A 708-amino-acid polypeptide reads, in one-letter code: Assimilatory nitrate reductase (708 aa).

Residues 15–73 form the 4Fe-4S Mo/W bis-MGD-type domain; it reads TKQVPTTCMRCAVGCGHVHLGSENAYGLETVRGDPSHPVNNGLACGRGIRESADPAGEW. [4Fe-4S] cluster-binding residues include cysteine 22, cysteine 25, cysteine 29, and cysteine 59. Residues 586-613 are disordered; it reads TTGREADGYNTGVRSRSDTPEEPVARVN.

The protein belongs to the prokaryotic molybdopterin-containing oxidoreductase family. NasA/NapA/NarB subfamily. In terms of assembly, is probably a monomer. Initially characterized as a dimer of proteins with a MW of 105 and 50 kDa. The cofactor is [4Fe-4S] cluster. Mo-bis(molybdopterin guanine dinucleotide) serves as cofactor.

The protein localises to the cytoplasm. The enzyme catalyses nitrite + 2 oxidized [2Fe-2S]-[ferredoxin] + H2O = nitrate + 2 reduced [2Fe-2S]-[ferredoxin] + 2 H(+). The protein operates within nitrogen metabolism; nitrate reduction (assimilation). Its activity is regulated as follows. Inhibited by cyanide and azide. Functionally, nitrate reductase is a key enzyme involved in the first step of nitrate assimilation. Catalyzes the reduction of nitrate to nitrite, using ferredoxin as the electron donor. Can use reduced methyl viologen but neither NADPH nor NADH as electron donors. The protein is Assimilatory nitrate reductase of Haloferax mediterranei (strain ATCC 33500 / DSM 1411 / JCM 8866 / NBRC 14739 / NCIMB 2177 / R-4) (Halobacterium mediterranei).